A 246-amino-acid polypeptide reads, in one-letter code: PF03932 family protein CutC (246 aa).

Belongs to the CutC family.

The protein localises to the cytoplasm. The polypeptide is PF03932 family protein CutC (Treponema denticola (strain ATCC 35405 / DSM 14222 / CIP 103919 / JCM 8153 / KCTC 15104)).